Consider the following 327-residue polypeptide: Phenylalanine--tRNA ligase alpha subunit (327 aa).

Glu252 lines the Mg(2+) pocket.

It belongs to the class-II aminoacyl-tRNA synthetase family. Phe-tRNA synthetase alpha subunit type 1 subfamily. In terms of assembly, tetramer of two alpha and two beta subunits. It depends on Mg(2+) as a cofactor.

Its subcellular location is the cytoplasm. It catalyses the reaction tRNA(Phe) + L-phenylalanine + ATP = L-phenylalanyl-tRNA(Phe) + AMP + diphosphate + H(+). This is Phenylalanine--tRNA ligase alpha subunit from Shigella boydii serotype 18 (strain CDC 3083-94 / BS512).